The chain runs to 671 residues: MAAAGVVSGKIIYEQEGVYIHSSCGKANDQDSLISGILRVLEKDAEVIVDWRPLDDALDSSSILCAGKDSSSVVEWTQAPKERAHRGSDQQSSYEAEWDMVTTVSFKKKPHTNGDAPGHRNGKSKWSFLFSLADLKSVKQSKEGMGWSYLVFCLKDDVMLPALHFHQGDSKLLIESLEKYVVLCESPQDSRTLLVNCQNKSLSQSFENLLDEPAYGLIQKIKKDPYTATMVGFSKVTNYIFDSLRGSDPSTHQRPPSEMADFLSDAIPGLKINQQEEPGFEVITRIDLGERPVVQRREPVSLEEWNKSLDPEGRLVAVESMKQKIFRGGLSHSLRKQAWKFLLGYFPWDSTKEERTQLQKQKTDEYFRMKLQWKSVSEAQEKRNSRLRDYRSLIEKDVNRTDRTNKFYEGQDNPGLILLHDILMTYCMYDFDLGYVQGMSDLLSPLLYVMENEVDAFWCFASYMDQMHQNFEEQMQGMKTQLIQLSTLLRLLDSGFCSYLESQDSGYLYFCFRWLLIRFKREFSFLDILRLWEVMWTELPCKNFHLLLCCAILESEKQQIMAKHYGFNEILKHINELSMKIDVEDILCKAEAISLQMAQCKELPQAVCEILGLQDSEITTPDSDTDENVGSPCPVSAFPSSTLPILAASEAKDDSPTQTLASPNACRLTPA.

Position 2 is an N-acetylalanine (alanine 2). Residues serine 23, serine 32, serine 70, serine 205, and serine 257 each carry the phosphoserine modification. The region spanning 329-539 is the Rab-GAP TBC domain; sequence GLSHSLRKQA…RLWEVMWTEL (211 aa). A phosphoserine mark is found at serine 623 and serine 655. Positions 650–671 are disordered; that stretch reads EAKDDSPTQTLASPNACRLTPA. At threonine 669 the chain carries Phosphothreonine.

As to quaternary structure, interacts with non-phosphorylated form of RAB8A; phosphorylation of RAB8A at 'Thr-72' disrupts this interaction. Interacts with ARMC12. Ubiquitous, with highest expression in heart, liver and testis and lower expression in brain, spleen, lung, kidney and skeletal muscle.

The protein localises to the cytoplasm. In terms of biological role, acts as a GTPase activating protein for RAB7A. Does not act on RAB4, RAB5 or RAB6. This is TBC1 domain family member 15 (Tbc1d15) from Mus musculus (Mouse).